An 88-amino-acid chain; its full sequence is UPF0297 protein BcerKBAB4_4234 (88 aa).

This sequence belongs to the UPF0297 family.

The polypeptide is UPF0297 protein BcerKBAB4_4234 (Bacillus mycoides (strain KBAB4) (Bacillus weihenstephanensis)).